The sequence spans 293 residues: MPTSSSFKHRIKEQEDYIRDWTAHREEIARISQDLALIAREINDVAGEIDSVTSSGTAPSTTLVDRVFDESLNFQKIPPLVHSKTPEGNNGRSGDPRPQAAEPPDHLTITRRRTWSRDEVMGDNLLLSSVFQFSKKIRQSIDKTAGKIRILFKDKDRNWDDIESKLRAESEVPIVKTSSMEISSILQELKRVEKQLQAINAMIDPDGTLEALNNMGFPSAMLPSPPKQKSSPVNNHHSPGQTPTLGQPEARALHPAAVSAAAEFENAESEADFSIHFNRVNPDGEEEDVTVHK.

Disordered regions lie at residues 78–110 and 217–270; these read PPLV…LTIT and FPSA…AESE. Residues 227–245 are compositionally biased toward polar residues; it reads KQKSSPVNNHHSPGQTPTL.

It belongs to the CEP170 family.

The protein is Cep170-like protein (CEP170P1) of Homo sapiens (Human).